Here is a 356-residue protein sequence, read N- to C-terminus: MEIHLESQEQEMKYQSQIWNQICGTVDTSVLRCAIQLGIFDAIHNSGKPMITLTELSSIVSSPSSSSIEPCNLYRLVRYLSQMDLISIGECLNEATVSLTGTSKLLLRNQEKSLIDWVLAIYCEMMVVVWHELSSSVSTPADEPPIFQKVHGKNALELAGEFPEWNDLINNAMTSDTSVTKPALIQGCGKILNGVTSLIDVGGGHGATMAYIVEAFPHIKGAVIDLPHVVEAAPERPGVEFISGDIFKSISNADAVLLKYVLHNWEDTECVNLLKRCKEAVPADKGKVIIMDLVIDDDDNSILTQAKLSLDLTVMNHGGGRERTKEDWRNLIEMSGFSRHEIIPISAMPSIIVAYP.

Residue methionine 173 participates in S-adenosyl-L-methionine binding. Aspartate 176 provides a ligand contact to substrate. Residues threonine 177, glycine 202, aspartate 225, 245-246 (DI), and lysine 259 contribute to the S-adenosyl-L-methionine site. A substrate-binding site is contributed by 260–264 (YVLHN). Histidine 263 (proton acceptor) is an active-site residue.

The protein belongs to the class I-like SAM-binding methyltransferase superfamily. Cation-independent O-methyltransferase family. COMT subfamily.

The catalysed reaction is (S)-scoulerine + S-adenosyl-L-methionine = (S)-tetrahydrocolumbamine + S-adenosyl-L-homocysteine + H(+). The protein operates within alkaloid biosynthesis. Functionally, methyltransferase involved in the biosynthesis of the benzylisoquinoline alkaloid noscapine. Catalyzes the conversion of (S)-scoulerine to (S)-tetrahydrocolumbamine. The heterodimers OMT2B-SOMT3 and OMT2B-6OMT do not possess 3-O-acetyl-4'-O-demethylpapaveroxine 4'-O-methyltransferase activity. The sequence is that of Probable scoulerine-9-O-methyltransferase OMT2B from Papaver somniferum (Opium poppy).